The chain runs to 62 residues: uncharacterized protein (62 aa).

Polar residues predominate over residues methionine 1–threonine 18. Positions methionine 1–alanine 24 are disordered.

This is an uncharacterized protein from Rickettsia conorii (strain ATCC VR-613 / Malish 7).